The sequence spans 127 residues: Large ribosomal subunit protein eL8 (127 aa).

The protein belongs to the eukaryotic ribosomal protein eL8 family. In terms of assembly, part of the 50S ribosomal subunit. Probably part of the RNase P complex.

Its subcellular location is the cytoplasm. Functionally, multifunctional RNA-binding protein that recognizes the K-turn motif in ribosomal RNA, the RNA component of RNase P, box H/ACA, box C/D and box C'/D' sRNAs. This is Large ribosomal subunit protein eL8 from Picrophilus torridus (strain ATCC 700027 / DSM 9790 / JCM 10055 / NBRC 100828 / KAW 2/3).